The following is a 470-amino-acid chain: GTPase Der (470 aa).

EngA-type G domains lie at 2–165 and 201–372; these read KTIA…GLEA and IRVG…ENFS. Residues 8–15, 55–59, 117–120, 207–214, 254–258, and 318–321 each bind GTP; these read GKPNVGKS, DTGGI, NKID, GKVNVGKS, DTAGI, and NKWD. Residues 373–457 enclose the KH-like domain; that stretch reads RRIPTSILNK…PILIRARKRG (85 aa).

It belongs to the TRAFAC class TrmE-Era-EngA-EngB-Septin-like GTPase superfamily. EngA (Der) GTPase family. As to quaternary structure, associates with the 50S ribosomal subunit.

GTPase that plays an essential role in the late steps of ribosome biogenesis. The sequence is that of GTPase Der from Wolinella succinogenes (strain ATCC 29543 / DSM 1740 / CCUG 13145 / JCM 31913 / LMG 7466 / NCTC 11488 / FDC 602W) (Vibrio succinogenes).